Here is an 87-residue protein sequence, read N- to C-terminus: Translation initiation factor IF-1 2 (87 aa).

An S1-like domain is found at 1–72 (MAKEELLELD…TKGRINFRHK (72 aa)).

Belongs to the IF-1 family. In terms of assembly, component of the 30S ribosomal translation pre-initiation complex which assembles on the 30S ribosome in the order IF-2 and IF-3, IF-1 and N-formylmethionyl-tRNA(fMet); mRNA recruitment can occur at any time during PIC assembly.

The protein resides in the cytoplasm. Functionally, one of the essential components for the initiation of protein synthesis. Stabilizes the binding of IF-2 and IF-3 on the 30S subunit to which N-formylmethionyl-tRNA(fMet) subsequently binds. Helps modulate mRNA selection, yielding the 30S pre-initiation complex (PIC). Upon addition of the 50S ribosomal subunit IF-1, IF-2 and IF-3 are released leaving the mature 70S translation initiation complex. This is Translation initiation factor IF-1 2 from Burkholderia vietnamiensis (strain G4 / LMG 22486) (Burkholderia cepacia (strain R1808)).